Consider the following 144-residue polypeptide: Lysozyme C II (144 aa).

An N-terminal signal peptide occupies residues 1–15 (MRAVVVLLLVAVASA). In terms of domain architecture, C-type lysozyme spans 16–144 (KVYDRCELAR…LRSYVAGCGV (129 aa)). 4 disulfides stabilise this stretch: Cys21–Cys142, Cys45–Cys130, Cys79–Cys95, and Cys91–Cys109. Catalysis depends on residues Glu50 and Asp67.

The protein resides in the secreted. It catalyses the reaction Hydrolysis of (1-&gt;4)-beta-linkages between N-acetylmuramic acid and N-acetyl-D-glucosamine residues in a peptidoglycan and between N-acetyl-D-glucosamine residues in chitodextrins.. Functionally, lysozymes have primarily a bacteriolytic function; those in tissues and body fluids are associated with the monocyte-macrophage system and enhance the activity of immunoagents. Has antibacterial activity against the Gram positive bacterium P.citreus. Has no antibacterial activity against the Gram negative bacteria E.coli and Y.ruckeri. Does not have hemolytic activity against trout erythrocytes. In Oncorhynchus mykiss (Rainbow trout), this protein is Lysozyme C II.